The chain runs to 92 residues: Alpha-elapitoxin-As2a (92 aa).

A signal peptide spans 1-21 (MKTLLLTLVVVTIVCLDLGDG). Disulfide bonds link Cys24-Cys41, Cys34-Cys62, Cys47-Cys51, Cys66-Cys77, and Cys78-Cys83.

Belongs to the three-finger toxin family. Long-chain subfamily. Type II alpha-neurotoxin sub-subfamily. Expressed by the venom gland.

The protein localises to the secreted. Its function is as follows. Binds with high affinity to muscular (alpha-1/CHRNA1) and neuronal (alpha-7/CHRNA7) nicotinic acetylcholine receptor (nAChR) and inhibits acetylcholine from binding to the receptor, thereby impairing neuromuscular and neuronal transmission. The sequence is that of Alpha-elapitoxin-As2a from Austrelaps superbus (Lowland copperhead snake).